A 514-amino-acid chain; its full sequence is Cytochrome P450 71AP13 (514 aa).

A helical membrane pass occupies residues 20 to 37 (HSSLFAFSLLILLLKFIY). 2 N-linked (GlcNAc...) asparagine glycosylation sites follow: asparagine 127 and asparagine 184. Cysteine 455 is a binding site for heme.

Belongs to the cytochrome P450 family. The cofactor is heme. As to expression, expressed in fruit kernel, seedlings, leaves and stems.

The protein resides in the membrane. The sequence is that of Cytochrome P450 71AP13 from Prunus mume (Japanese apricot).